A 156-amino-acid polypeptide reads, in one-letter code: ATP synthase subunit b (156 aa).

Residues 7–27 traverse the membrane as a helical segment; it reads LIGQLIAFALFVAFCMKFVWP.

It belongs to the ATPase B chain family. In terms of assembly, F-type ATPases have 2 components, F(1) - the catalytic core - and F(0) - the membrane proton channel. F(1) has five subunits: alpha(3), beta(3), gamma(1), delta(1), epsilon(1). F(0) has three main subunits: a(1), b(2) and c(10-14). The alpha and beta chains form an alternating ring which encloses part of the gamma chain. F(1) is attached to F(0) by a central stalk formed by the gamma and epsilon chains, while a peripheral stalk is formed by the delta and b chains.

The protein resides in the cell inner membrane. Its function is as follows. F(1)F(0) ATP synthase produces ATP from ADP in the presence of a proton or sodium gradient. F-type ATPases consist of two structural domains, F(1) containing the extramembraneous catalytic core and F(0) containing the membrane proton channel, linked together by a central stalk and a peripheral stalk. During catalysis, ATP synthesis in the catalytic domain of F(1) is coupled via a rotary mechanism of the central stalk subunits to proton translocation. In terms of biological role, component of the F(0) channel, it forms part of the peripheral stalk, linking F(1) to F(0). The protein is ATP synthase subunit b of Actinobacillus pleuropneumoniae serotype 7 (strain AP76).